Reading from the N-terminus, the 270-residue chain is Glutamate racemase (270 aa).

Residues 7–8 (DS) and 39–40 (YG) each bind substrate. The active-site Proton donor/acceptor is C70. 71 to 72 (NT) contributes to the substrate binding site. C194 functions as the Proton donor/acceptor in the catalytic mechanism. Residue 195–196 (TH) participates in substrate binding.

Belongs to the aspartate/glutamate racemases family.

It catalyses the reaction L-glutamate = D-glutamate. Its pathway is cell wall biogenesis; peptidoglycan biosynthesis. Provides the (R)-glutamate required for cell wall biosynthesis. The protein is Glutamate racemase of Paracoccus denitrificans (strain Pd 1222).